An 81-amino-acid polypeptide reads, in one-letter code: Sulfur carrier protein TusA (81 aa).

The active-site Cysteine persulfide intermediate is Cys19.

It belongs to the sulfur carrier protein TusA family.

It is found in the cytoplasm. Sulfur carrier protein which probably makes part of a sulfur-relay system. In Shewanella sediminis (strain HAW-EB3), this protein is Sulfur carrier protein TusA.